Consider the following 510-residue polypeptide: Maturase K (510 aa).

The protein belongs to the intron maturase 2 family. MatK subfamily.

It localises to the plastid. It is found in the chloroplast. Its function is as follows. Usually encoded in the trnK tRNA gene intron. Probably assists in splicing its own and other chloroplast group II introns. The protein is Maturase K of Penstemon heterophyllus (Foothill penstemon).